The chain runs to 49 residues: uncharacterized protein (49 aa).

This is an uncharacterized protein from Enterobacteria phage T3 (Bacteriophage T3).